Consider the following 73-residue polypeptide: UPF0235 protein PCC7424_0673 (73 aa).

Belongs to the UPF0235 family.

This is UPF0235 protein PCC7424_0673 from Gloeothece citriformis (strain PCC 7424) (Cyanothece sp. (strain PCC 7424)).